A 388-amino-acid polypeptide reads, in one-letter code: Succinate--CoA ligase [ADP-forming] subunit beta (388 aa).

The ATP-grasp domain occupies 9–244 (KQLFAEYGLP…PSQEDEREAH (236 aa)). ATP contacts are provided by residues Lys-46, 53–55 (GRG), Glu-99, Thr-102, and Glu-107. Mg(2+) is bound by residues Asn-199 and Asp-213. Residues Asn-264 and 321–323 (GIV) each bind substrate.

Belongs to the succinate/malate CoA ligase beta subunit family. As to quaternary structure, heterotetramer of two alpha and two beta subunits. Mg(2+) is required as a cofactor.

The catalysed reaction is succinate + ATP + CoA = succinyl-CoA + ADP + phosphate. It catalyses the reaction GTP + succinate + CoA = succinyl-CoA + GDP + phosphate. Its pathway is carbohydrate metabolism; tricarboxylic acid cycle; succinate from succinyl-CoA (ligase route): step 1/1. Functionally, succinyl-CoA synthetase functions in the citric acid cycle (TCA), coupling the hydrolysis of succinyl-CoA to the synthesis of either ATP or GTP and thus represents the only step of substrate-level phosphorylation in the TCA. The beta subunit provides nucleotide specificity of the enzyme and binds the substrate succinate, while the binding sites for coenzyme A and phosphate are found in the alpha subunit. In Saccharophagus degradans (strain 2-40 / ATCC 43961 / DSM 17024), this protein is Succinate--CoA ligase [ADP-forming] subunit beta.